Consider the following 75-residue polypeptide: Guanine nucleotide-binding protein G(I)/G(S)/G(O) subunit gamma-4 (75 aa).

The residue at position 72 (Cys72) is a Cysteine methyl ester. The S-geranylgeranyl cysteine moiety is linked to residue Cys72. The propeptide at 73–75 is removed in mature form; sequence TIL.

Belongs to the G protein gamma family. As to quaternary structure, g proteins are composed of 3 units, alpha, beta and gamma. Interacts with beta-1 and beta-2, but not with beta-3. Interacts with KCNK1. Interacts (via C-terminus) with KCNK2/TREK-1 (via N-terminus); this interaction confers ion selectivity to Cl(-) and L-glutamate. In terms of tissue distribution, brain.

Its subcellular location is the cell membrane. Functionally, guanine nucleotide-binding proteins (G proteins) are involved as a modulator or transducer in various transmembrane signaling systems. The beta and gamma chains are required for the GTPase activity, for replacement of GDP by GTP, and for G protein-effector interaction. The chain is Guanine nucleotide-binding protein G(I)/G(S)/G(O) subunit gamma-4 (Gng4) from Mus musculus (Mouse).